A 457-amino-acid polypeptide reads, in one-letter code: Chromosomal replication initiator protein DnaA (457 aa).

Positions 1 to 81 (MERDLSQLWQ…NNTDLVIKVQ (81 aa)) are domain I, interacts with DnaA modulators. Positions 81-119 (QEGSKPAARKVVAQQEIANTPVQHSAPMPENEPQAAFRS) are domain II. The tract at residues 120–337 (NLNQHHLFEN…GALNRVHANA (218 aa)) is domain III, AAA+ region. 4 residues coordinate ATP: Gly-165, Gly-167, Lys-168, and Thr-169. Positions 338–457 (DFTGKAITID…WSNLIRTLSA (120 aa)) are domain IV, binds dsDNA.

Belongs to the DnaA family. Oligomerizes as a right-handed, spiral filament on DNA at oriC.

It localises to the cytoplasm. Its function is as follows. Plays an essential role in the initiation and regulation of chromosomal replication. ATP-DnaA binds to the origin of replication (oriC) to initiate formation of the DNA replication initiation complex once per cell cycle. Binds the DnaA box (a 9 base pair repeat at the origin) and separates the double-stranded (ds)DNA. Forms a right-handed helical filament on oriC DNA; dsDNA binds to the exterior of the filament while single-stranded (ss)DNA is stabiized in the filament's interior. The ATP-DnaA-oriC complex binds and stabilizes one strand of the AT-rich DNA unwinding element (DUE), permitting loading of DNA polymerase. After initiation quickly degrades to an ADP-DnaA complex that is not apt for DNA replication. Binds acidic phospholipids. This is Chromosomal replication initiator protein DnaA from Mannheimia succiniciproducens (strain KCTC 0769BP / MBEL55E).